Consider the following 195-residue polypeptide: MRIKICGITRVEDVLFAEKAGADAIGVVMYSPTSRRSVPDAKAREIFSALGPFVTRVVVTHTESESDLEKILAIRPDAIQISHPFVFEKYPGVRVLRVIGRGDAVPTDCDAVIVDESMGAGKAFDQEFAKVVAKTSRVPVILAGGLTPENVGLAIREIRPHAVDVASGVETEPGIKDHTKIAAFIRAAREADHGT.

It belongs to the TrpF family.

It carries out the reaction N-(5-phospho-beta-D-ribosyl)anthranilate = 1-(2-carboxyphenylamino)-1-deoxy-D-ribulose 5-phosphate. It participates in amino-acid biosynthesis; L-tryptophan biosynthesis; L-tryptophan from chorismate: step 3/5. The polypeptide is N-(5'-phosphoribosyl)anthranilate isomerase (Methanoregula boonei (strain DSM 21154 / JCM 14090 / 6A8)).